A 339-amino-acid polypeptide reads, in one-letter code: Glyceraldehyde-3-phosphate dehydrogenase (339 aa).

Residues 12-13 (RI), Asp-34, and Lys-79 contribute to the NAD(+) site. Residues 150–152 (SCT), Thr-181, 210–211 (TG), and Arg-233 each bind D-glyceraldehyde 3-phosphate. The active-site Nucleophile is Cys-151. Position 316 (Asn-316) interacts with NAD(+).

This sequence belongs to the glyceraldehyde-3-phosphate dehydrogenase family. Homotetramer.

Its subcellular location is the cytoplasm. It carries out the reaction D-glyceraldehyde 3-phosphate + phosphate + NAD(+) = (2R)-3-phospho-glyceroyl phosphate + NADH + H(+). It participates in carbohydrate degradation; glycolysis; pyruvate from D-glyceraldehyde 3-phosphate: step 1/5. The sequence is that of Glyceraldehyde-3-phosphate dehydrogenase (GPD) from Cryptococcus neoformans var. neoformans serotype D (strain B-3501A) (Filobasidiella neoformans).